A 296-amino-acid chain; its full sequence is Fructose-bisphosphate aldolase class 1 (296 aa).

Glu-175 acts as the Proton acceptor in catalysis. Lys-212 acts as the Schiff-base intermediate with dihydroxyacetone-P in catalysis.

Belongs to the class I fructose-bisphosphate aldolase family.

The enzyme catalyses beta-D-fructose 1,6-bisphosphate = D-glyceraldehyde 3-phosphate + dihydroxyacetone phosphate. It participates in carbohydrate degradation; glycolysis; D-glyceraldehyde 3-phosphate and glycerone phosphate from D-glucose: step 4/4. The polypeptide is Fructose-bisphosphate aldolase class 1 (fda) (Staphylococcus epidermidis (strain ATCC 12228 / FDA PCI 1200)).